Here is a 259-residue protein sequence, read N- to C-terminus: MADRSLHLVVLILLGTALCAAQPRGRILRGQEAPSHSRPYMASVQVNGKHVCGGFLIAEQWVMSAAHCLEDVADGKVQVLLGAHSLSQPEPSKRLYDVLRVVPHPGSRTETIDHDLLLLQLSEKAVLGPAVQLLPWQREDRDVAAGTLCDVAGWGVVSHTGRKPDRLQHLLLPVLDRATCNLRTYHDGTITERMMCAESNRRDTCKGDSGGPLVCGSVAEGVVTSGSRICGNHKKPGIYTRLASYVAWIDGVMAEGAAA.

The signal sequence occupies residues 1 to 21 (MADRSLHLVVLILLGTALCAA). A propeptide spans 22–26 (QPRGR) (activation peptide). The Peptidase S1 domain maps to 27 to 254 (ILRGQEAPSH…YVAWIDGVMA (228 aa)). Cysteine 52 and cysteine 68 are oxidised to a cystine. Residues histidine 67 and aspartate 115 each act as charge relay system in the active site. 3 disulfide bridges follow: cysteine 149–cysteine 215, cysteine 180–cysteine 196, and cysteine 205–cysteine 230. Serine 209 (charge relay system) is an active-site residue. A self-inhibitor loop region spans residues 224 to 228 (TSGSR).

The protein belongs to the peptidase S1 family. Post-translationally, CFD is activated by the removal of 5 residues at the N-terminus, named activation peptide, by the MASP-3 isoform of MASP1.

The protein resides in the secreted. The catalysed reaction is Selective cleavage of Arg-|-Lys bond in complement factor B when in complex with complement subcomponent C3b or with cobra venom factor.. Circulates in plasma in a mature but self-inhibited form. Activated by factor B (CFB), which displaces the self-inhibition loop. Associates with CFB complexed with complement C3b. In terms of biological role, serine protease that initiates the alternative pathway of the complement system, a cascade of proteins that leads to phagocytosis and breakdown of pathogens and signaling that strengthens the adaptive immune system. In contrast to other complement pathways (classical, lectin and GZMK) that are directly activated by pathogens or antigen-antibody complexes, the alternative complement pathway is initiated by the spontaneous hydrolysis of complement C3. The alternative complement pathway acts as an amplification loop that enhances complement activation by mediating the formation of C3 and C5 convertases. Activated CFD cleaves factor B (CFB) when the latter is complexed with complement C3b, activating the C3 convertase of the alternative pathway. The polypeptide is Complement factor D (CFD) (Bos taurus (Bovine)).